The primary structure comprises 312 residues: uncharacterized protein (312 aa).

The protein belongs to the asfivirus CP312R family.

The protein resides in the virion. This is an uncharacterized protein from African swine fever virus (isolate Tick/South Africa/Pretoriuskop Pr4/1996) (ASFV).